The following is a 315-amino-acid chain: Cysteine proteinase 1 (315 aa).

The N-terminal stretch at 1–13 (MFTFILMFYIGYG) is a signal peptide. A propeptide spans 14 to 93 (IDFNTWVANN…KGEVRYLNIQ (80 aa)) (activation peptide). 2 disulfide bridges follow: Cys115/Cys161 and Cys152/Cys193. Residue Cys118 is part of the active site. Catalysis depends on residues His259 and Asn279.

The protein belongs to the peptidase C1 family.

It is found in the lysosome. Its activity is regulated as follows. Inhibited by cysteine protease inhibitors ICP1 and ICP2. In terms of biological role, cysteine protease which degrades matrix proteins such as collagen, laminin and fibronectin and thus is involved in the destruction of human tissue. Can abolish adhesion. May play an important role in pathogenicity. This is Cysteine proteinase 1 from Entamoeba histolytica (strain ATCC 30459 / HM-1:IMSS / ABRM).